Here is a 311-residue protein sequence, read N- to C-terminus: Triacylglycerol lipase (311 aa).

Positions 1 to 26 (MKKKSLLPLGLAIGLASLAASPLIQA) are cleaved as a signal peptide. The region spanning 35 to 280 (PIVLAHGMLG…DNYRMNHLDE (246 aa)) is the AB hydrolase-1 domain. Residue Met-42 participates in substrate binding. The active-site Nucleophile is Ser-108. His-109 is a substrate binding site. Residues Cys-209 and Cys-261 are joined by a disulfide bond. Asp-235 lines the Ca(2+) pocket. Residues Asp-255 and His-277 each act as charge relay system in the active site. Ca(2+) contacts are provided by Asp-279, Gln-283, and Leu-287.

This sequence belongs to the AB hydrolase superfamily. Pseudomonas lipase family. As to quaternary structure, monomer. It depends on Ca(2+) as a cofactor.

The protein resides in the secreted. It carries out the reaction a triacylglycerol + H2O = a diacylglycerol + a fatty acid + H(+). Its activity is regulated as follows. Na(+) increases lipase activity. Inhibited by diethyl p-nitrophenyl phosphate and 3,4-dichloroisocoumarin (DCI). Its function is as follows. Catalyzes the hydrolysis of triacylglycerol. It also exhibits some esterase activity with p-nitrophenyl acetate and Tween 80 as substrates, however the lipase activity is approximately eight times the esterase activity. It shows a marked specificity for the 1,3-oleyl residues of triolein. This chain is Triacylglycerol lipase, found in Pseudomonas aeruginosa (strain ATCC 15692 / DSM 22644 / CIP 104116 / JCM 14847 / LMG 12228 / 1C / PRS 101 / PAO1).